We begin with the raw amino-acid sequence, 794 residues long: Protein sel-1 homolog 1 (794 aa).

An N-terminal signal peptide occupies residues 1 to 21; the sequence is MQVRVRLLLLLCAVLLGSAAA. Residues 22 to 737 are interaction with ERLEC1, OS9 and SYVN1; the sequence is SSDEETNQDE…DLFTQLDMDQ (716 aa). Topologically, residues 22–738 are lumenal; that stretch reads SSDEETNQDE…LFTQLDMDQL (717 aa). Acidic residues predominate over residues 23–32; sequence SDEETNQDES. Disordered stretches follow at residues 23–46 and 73–105; these read SDEE…GSVK and QDEE…KTYE. Positions 122–170 constitute a Fibronectin type-II domain; it reads AHGEPCHFPFLFLDKEYDECTSDGREDGRLWCATTYDYKTDEKWGFCET. 2 cysteine pairs are disulfide-bonded: Cys127-Cys153 and Cys141-Cys168. Sel1-like repeat units follow at residues 183-218, 219-254, 255-290, 291-326, 373-409, 410-446, 447-482, 483-518, and 519-554; these read AEAI…GMNH, TKAL…EEGS, PKGQ…LGGN, LIAH…NHVA, VQAQ…NAGN, SHAM…DMGN, PVGQ…EQGW, VDGQ…QGGH, and ILAF…ERGR. Residues Asn195 and Asn217 are each glycosylated (N-linked (GlcNAc...) asparagine). The N-linked (GlcNAc...) asparagine glycan is linked to Asn272. The segment at 352–537 is important for homodimerization and oligomerization; the sequence is NSGMLEEDLI…MHASGTGVMR (186 aa). Asn431 carries an N-linked (GlcNAc...) asparagine glycan. N-linked (GlcNAc...) asparagine glycosylation is present at Asn608. Sel1-like repeat units follow at residues 627 to 662 and 664 to 699; these read TVAR…EQQH and AQAM…EASP. The segment at 643-723 is interaction with SYVN1; the sequence is TDVDYETAFI…VVYFLQYIRE (81 aa). The mediates retention in the endoplasmic reticulum stretch occupies residues 738–794; sequence LLGPEWDLYLMTIIALLLGTVIAYRQRQHQDIPVPRPPGPRPAPPQQEGPPEQQPPQ. A helical membrane pass occupies residues 739–759; sequence LGPEWDLYLMTIIALLLGTVI. The Cytoplasmic segment spans residues 760–794; that stretch reads AYRQRQHQDIPVPRPPGPRPAPPQQEGPPEQQPPQ. Residues 767-794 are disordered; that stretch reads QDIPVPRPPGPRPAPPQQEGPPEQQPPQ. The span at 771-794 shows a compositional bias: pro residues; that stretch reads VPRPPGPRPAPPQQEGPPEQQPPQ.

Belongs to the sel-1 family. As to quaternary structure, homodimer and homooligomer. May form a complex with ERLEC1, HSPA5, OS9, and SYVN1. Interacts with FOXRED2 and EDEM1. Interacts with LPL and LMF1; may stabilize the complex formed by LPL and LMF1 and thereby promote the export of LPL dimers. Component of the HRD1 complex, which comprises at least SYNV1/HRD1, DERL1/2, FAM8A1, HERPUD1/HERP, OS9, SEL1L and UBE2J1. SYNV1 assembles with SEL1L and FAM8A1 through its transmembrane domains, but interaction with its cytoplasmic domain is required to confer stability to FAM8A1 and enhance recruitment of HERPUD1. The interaction with SYNV1/HRD1 is direct. Post-translationally, N-glycosylated.

It is found in the endoplasmic reticulum membrane. Its function is as follows. Plays a role in the endoplasmic reticulum quality control (ERQC) system also called ER-associated degradation (ERAD) involved in ubiquitin-dependent degradation of misfolded endoplasmic reticulum proteins. Enhances SYVN1 stability. Plays a role in LPL maturation and secretion. Required for normal differentiation of the pancreas epithelium, and for normal exocrine function and survival of pancreatic cells. May play a role in Notch signaling. The polypeptide is Protein sel-1 homolog 1 (Sel1l) (Rattus norvegicus (Rat)).